The chain runs to 90 residues: Small ribosomal subunit protein uS17 (90 aa).

It belongs to the universal ribosomal protein uS17 family. In terms of assembly, part of the 30S ribosomal subunit.

Functionally, one of the primary rRNA binding proteins, it binds specifically to the 5'-end of 16S ribosomal RNA. The polypeptide is Small ribosomal subunit protein uS17 (Acidiphilium cryptum (strain JF-5)).